A 385-amino-acid chain; its full sequence is Proliferation-associated protein A (385 aa).

Belongs to the peptidase M24 family.

In Dictyostelium discoideum (Social amoeba), this protein is Proliferation-associated protein A (prlA).